The following is a 130-amino-acid chain: Small ribosomal subunit protein uS8 (130 aa).

The protein belongs to the universal ribosomal protein uS8 family.

This is Small ribosomal subunit protein uS8 (RPS22) from Kluyveromyces marxianus (Yeast).